The primary structure comprises 322 residues: uncharacterized protein (322 aa).

Residues 26-267 (HFGHKVFKVA…CDQLEIIPPE (242 aa)) form the Radical SAM core domain. The [4Fe-4S] cluster site is built by Cys-42, Cys-54, and Cys-57.

This sequence belongs to the radical SAM superfamily. [4Fe-4S] cluster is required as a cofactor.

This is an uncharacterized protein from Bacillus subtilis (strain 168).